Here is a 123-residue protein sequence, read N- to C-terminus: Large ribosomal subunit protein uL18 (123 aa).

This sequence belongs to the universal ribosomal protein uL18 family. Part of the 50S ribosomal subunit; part of the 5S rRNA/L5/L18/L25 subcomplex. Contacts the 5S and 23S rRNAs.

Its function is as follows. This is one of the proteins that bind and probably mediate the attachment of the 5S RNA into the large ribosomal subunit, where it forms part of the central protuberance. This Chlamydia muridarum (strain MoPn / Nigg) protein is Large ribosomal subunit protein uL18.